We begin with the raw amino-acid sequence, 638 residues long: MPKITLPDGTKKVFEKAVTTLDIAKSIGAGLAKATIAGKVNNVLFDATLPIKNDSKVVIITSRDKEGIEIIRHSFAHLIGHAVKQIYPNIKMAIGPVIEDGFYYDIFSEYRFTPEDLIKIEERINQLIRKDYDVEVLQVSKQEAIKTFKERDEIFKLRIIEEIDEKDSINLYKHEEYIDMCRGPHVPNTRHLRHFKLLKLSGSYWRGDSKNESLQRIYGTAWSKEKDLTNYLKRIEEAEKRDHRKLGKKHSLFHIQEESPGMIFWHPNGWIIYQILEKYIREILRKNEYLEIKTPQAVDKSLWEKSGHWEKFRDDMFTTASENRTYAIKPMNCPCHIQVFNQGLKSYKDLPLRLAEFGSCHRNEPSGALHGLMRVRNFTQDDAHIFCTEEQIQEEVSTFIDLVFEVYNTFGFDEIIIKLSTRPEKRVGSEDIWDKSEEALTEALNNKNLKWELQPGEGAFYGPKIEFSLKDCLNRIWQCGTIQVDFSMPVRLDATFVDINNEKKSPVMLHRAILGSFERFIGILIEQYEAKFPIWLAPTQIILLSITERNIKKCIEFNNLLNTKGYRSKIDIRNEKIGYKIRESTLARIPLIGIVGDKEQELNSVTLRALDGSNLGIYELDNLFKLMNTLIEKKGRVD.

The 61-residue stretch at 1–61 (MPKITLPDGT…KNDSKVVIIT (61 aa)) folds into the TGS domain. The catalytic stretch occupies residues 242–533 (DHRKLGKKHS…LIEQYEAKFP (292 aa)). Zn(2+)-binding residues include Cys-333, His-384, and His-510.

The protein belongs to the class-II aminoacyl-tRNA synthetase family. Homodimer. It depends on Zn(2+) as a cofactor.

The protein resides in the cytoplasm. The catalysed reaction is tRNA(Thr) + L-threonine + ATP = L-threonyl-tRNA(Thr) + AMP + diphosphate + H(+). Catalyzes the attachment of threonine to tRNA(Thr) in a two-step reaction: L-threonine is first activated by ATP to form Thr-AMP and then transferred to the acceptor end of tRNA(Thr). Also edits incorrectly charged L-seryl-tRNA(Thr). The chain is Threonine--tRNA ligase from Prochlorococcus marinus (strain MIT 9515).